Consider the following 905-residue polypeptide: Translation initiation factor IF-2 (905 aa).

3 disordered regions span residues 52-84 (QSHG…SKSV), 116-230 (AKKR…QKKT), and 269-318 (FEKE…FEKP). Residues 65–84 (KSKTTSTARVTGSSGKSKSV) are compositionally biased toward polar residues. Positions 116–138 (AKKRAEEEAKKREQVKKEAEERQ) are enriched in basic and acidic residues. Positions 165–178 (VVVKKGSKAAAAAK) are enriched in low complexity. Composition is skewed to basic and acidic residues over residues 190-230 (PKVE…QKKT) and 269-278 (FEKERREIKR). The 170-residue stretch at 406–575 (TRPPVVTIMG…NLQAELMELE (170 aa)) folds into the tr-type G domain. The tract at residues 415 to 422 (GHVDHGKT) is G1. Residue 415-422 (GHVDHGKT) participates in GTP binding. The interval 440–444 (GITQH) is G2. The interval 461–464 (DTPG) is G3. GTP contacts are provided by residues 461 to 465 (DTPGH) and 515 to 518 (NKMD). The tract at residues 515 to 518 (NKMD) is G4. The G5 stretch occupies residues 551 to 553 (SAK).

It belongs to the TRAFAC class translation factor GTPase superfamily. Classic translation factor GTPase family. IF-2 subfamily.

It is found in the cytoplasm. One of the essential components for the initiation of protein synthesis. Protects formylmethionyl-tRNA from spontaneous hydrolysis and promotes its binding to the 30S ribosomal subunits. Also involved in the hydrolysis of GTP during the formation of the 70S ribosomal complex. The polypeptide is Translation initiation factor IF-2 (Psychrobacter sp. (strain PRwf-1)).